The chain runs to 465 residues: Argininosuccinate lyase (465 aa).

Belongs to the lyase 1 family. Argininosuccinate lyase subfamily.

The protein resides in the cytoplasm. The enzyme catalyses 2-(N(omega)-L-arginino)succinate = fumarate + L-arginine. The protein operates within amino-acid biosynthesis; L-arginine biosynthesis; L-arginine from L-ornithine and carbamoyl phosphate: step 3/3. This chain is Argininosuccinate lyase, found in Deinococcus geothermalis (strain DSM 11300 / CIP 105573 / AG-3a).